Here is a 178-residue protein sequence, read N- to C-terminus: Small ribosomal subunit protein uS5 (178 aa).

The region spanning 15–78 is the S5 DRBM domain; the sequence is FEEKIIEIRR…SAAKRNIIEV (64 aa).

Belongs to the universal ribosomal protein uS5 family. Part of the 30S ribosomal subunit. Contacts proteins S4 and S8.

Functionally, with S4 and S12 plays an important role in translational accuracy. Located at the back of the 30S subunit body where it stabilizes the conformation of the head with respect to the body. The protein is Small ribosomal subunit protein uS5 of Thermotoga sp. (strain RQ2).